The sequence spans 426 residues: Histidine--tRNA ligase (426 aa).

It belongs to the class-II aminoacyl-tRNA synthetase family.

It localises to the cytoplasm. The enzyme catalyses tRNA(His) + L-histidine + ATP = L-histidyl-tRNA(His) + AMP + diphosphate + H(+). The protein is Histidine--tRNA ligase of Saccharolobus islandicus (strain Y.N.15.51 / Yellowstone #2) (Sulfolobus islandicus).